The following is a 380-amino-acid chain: N-acetylaspartylglutamate synthase A (380 aa).

Residues 115-300 (FQELAGHGVP…VGAIIADYAM (186 aa)) form the ATP-grasp domain. Residues Lys154, 189 to 199 (QKYVKESHGKD), and Arg215 each bind ATP. Mg(2+) is bound by residues Asp260, Glu273, and Asn275. Residues Asp260, Glu273, and Asn275 each contribute to the Mn(2+) site. Ser319 is subject to Phosphoserine. The tract at residues 345–370 (GSTSSESEPELGEARDSSVKTMGAPP) is disordered.

The protein belongs to the RimK family. Requires Mg(2+) as cofactor. The cofactor is Mn(2+). As to expression, highly expressed in spinal cord and brain.

Its subcellular location is the cytoplasm. The enzyme catalyses N-acetyl-L-aspartate + L-glutamate + ATP = N-acetyl-L-aspartyl-L-glutamate + ADP + phosphate + H(+). The catalysed reaction is N-acetyl-L-aspartate + 2 L-glutamate + 2 ATP = N-acetyl-L-aspartyl-L-glutamyl-L-glutamate + 2 ADP + 2 phosphate + 2 H(+). In terms of biological role, catalyzes the synthesis of N-acetyl-L-aspartyl-L-glutamate (NAAG) and N-acetyl-L-aspartyl-L-glutamyl-L-glutamate. The polypeptide is N-acetylaspartylglutamate synthase A (Rimkla) (Mus musculus (Mouse)).